We begin with the raw amino-acid sequence, 368 residues long: MPGQIISIPFLSQNEDMDKYLLEYRSLKLLHQSSNSFQSHNAPSHQSNYHPHYNHMKYNNTGSYYYYNNNNNSSVNPHNQAGLQSINRSIPSAPYGAYNQNRANDVPYMNTQKKHHRFSANNNLNQQKYKQYPQYTSNPMVTAHLKQTYPQLYYNSNVNAHNNNNNSNNNNNNNNNSNNNNNLYNQTQFSTRYFNSNSSPSLTSSTSNSSSPYNQSTFEYILPSTSAASTNLSSSSSNNSMHTNPTTATSTSADLINDLPVGPTSSSLISDLHSPPTVSFLPASQTLLMSSTTSSSIGTNINPPQHSPSPSQREDFSTAPVNMSSSASLLMNDSSLGWGSNHMNVSSSSQPASSRPFGIWNTDMSVWS.

Residues 156–182 (SNVNAHNNNNNSNNNNNNNNNSNNNNN) are compositionally biased toward low complexity. Disordered regions lie at residues 156–213 (SNVN…SSPY), 228–259 (ASTN…INDL), and 291–319 (STTS…FSTA). Over residues 183–194 (LYNQTQFSTRYF) the composition is skewed to polar residues. Composition is skewed to low complexity over residues 195 to 213 (NSNS…SSPY) and 228 to 240 (ASTN…SNNS). 2 stretches are compositionally biased toward polar residues: residues 241 to 254 (MHTN…TSAD) and 297 to 311 (IGTN…PSPS).

This is an uncharacterized protein from Saccharomyces cerevisiae (strain ATCC 204508 / S288c) (Baker's yeast).